The primary structure comprises 1480 residues: UDP-N-acetylglucosamine--peptide N-acetylglucosaminyltransferase (1480 aa).

4 TPR repeats span residues 38-71 (IFLYAIQGEISFKQKDWIQAFAAYEKAVAESKQK), 113-146 (VQVLAQLALLYLMCERYSEAEKLLSSIVESSTSN), 176-209 (ATILNNLAICNSKLGNHTLAFDQFQQALDIIKDP), and 288-321 (STICYNIGKLELTLGNLDRSVNHFKKSIEYQPSF). A compositionally biased stretch (basic and acidic residues) spans 468–485 (PQEKESPKSDKIASEKPL). The interval 468–497 (PQEKESPKSDKIASEKPLVESNPGRSRTPS) is disordered. TPR repeat units follow at residues 613-646 (YEPFYNLGNILKADEENKKALQYYSRAIELNPRF) and 648-680 (DGYLARGVLYAELHRFETAYLDFSKCIELDPDN). The segment at 1093 to 1128 (LSLDGSDATSSSVDSGIGSRTHSEAPIGGGDKDEGA) is disordered. Polar residues predominate over residues 1099-1112 (DATSSSVDSGIGSR). UDP-binding positions include glutamine 1269, lysine 1272, 1333–1336 (HIRR), 1351–1353 (GST), and aspartate 1357.

This sequence belongs to the glycosyltransferase 41 family. O-GlcNAc transferase subfamily.

It is found in the cytoplasm. It localises to the nucleus. It carries out the reaction L-seryl-[protein] + UDP-N-acetyl-alpha-D-glucosamine = 3-O-(N-acetyl-beta-D-glucosaminyl)-L-seryl-[protein] + UDP + H(+). The enzyme catalyses L-threonyl-[protein] + UDP-N-acetyl-alpha-D-glucosamine = 3-O-(N-acetyl-beta-D-glucosaminyl)-L-threonyl-[protein] + UDP + H(+). The protein operates within protein modification; protein glycosylation. Its function is as follows. Catalyzes the transfer of a single N-acetylglucosamine from UDP-GlcNAc to a serine or threonine residue in cytoplasmic and nuclear proteins resulting in their modification with a beta-linked N-acetylglucosamine (O-GlcNAc). In Giardia intestinalis (strain ATCC 50803 / WB clone C6) (Giardia lamblia), this protein is UDP-N-acetylglucosamine--peptide N-acetylglucosaminyltransferase.